A 181-amino-acid chain; its full sequence is Negative modulator of initiation of replication (181 aa).

3 interaction with DNA regions span residues 87 to 88 (AV), 116 to 120 (RTRVY), and 150 to 156 (NTNTGRK).

The protein belongs to the SeqA family. In terms of assembly, homodimer. Polymerizes to form helical filaments.

It is found in the cytoplasm. Negative regulator of replication initiation, which contributes to regulation of DNA replication and ensures that replication initiation occurs exactly once per chromosome per cell cycle. Binds to pairs of hemimethylated GATC sequences in the oriC region, thus preventing assembly of replication proteins and re-initiation at newly replicated origins. Repression is relieved when the region becomes fully methylated. In Shigella dysenteriae serotype 1 (strain Sd197), this protein is Negative modulator of initiation of replication.